The sequence spans 1758 residues: MSCSKAYGERYVASVQGSAPSPRKKSTRGFYFAKLYYEAKEYDLAKKYICTYINVREMDPRAHRFLGLLYELEENTEKAVECYRRSVELNPTQKDLVLKIAELLCKNDVTDGRAEYWVERAAKLFPGSPAIYKLKEQLLDCEGEDGWNKLFDLIQSELYVRPDDVHVNIRLVELYRSTKRLKDAVARCHEAERNIALRSSLEWNSCVVQTLKEYLESLQCLESDKSDWRATNTDLLLAYANLMLLTLSTRDVQESRELLESFDSALQSAKSSLGGNDELSATFLEMKGHFYMHAGSLLLKMGQHGNNVQWRALSELAALCYLIAFQVPRPKIKLIKGEAGQNLLEMMACDRLSQSGHMLLNLSRGKQDFLKVVVETFANKSGQSALYDALFSSQSPKDTSFLGSDDIGNIDVQEPELEDLARYDVGAIRAHNGSLQHLTWLGLQWNSLPALPGIRKWLKQLFHHLPQETSRLETNAPESICILDLEVFLLGVVYTSHLQLKEKCNSHHSSYQPLCLPLPVCKQLCTERQKSWWDAVCTLIHRKAVPGNSAKLRLLVQHEINTLRAQEKHGLQPALLVHWAKCLQKMGSGLNSFYDQREYIGRSVHYWKKVLPLLKIIKKKNSIPEPIDPLFKHFHSVDIQASEIVEYEEDAHVTFAILDAVNGNIEDAMTAFESIKSVVSYWNLALIFHRKAEDIANDALSPEEQEECKNYLRKTRGYLIKILDDSDSNLSVVKKLPVPLESVKEMLKSVMQELENYSEGGPLYKNGSLRNADSEIKHSTPSPTKYSLSPSKSYKYSPKTPPRWAEDQNSLLKMIRQEVKAIKEEMQELKLNSSKSASHHRWPTENYGPDSVPDGYQGSQTFHGAPLTVATTGPSVYYSQSPAYNSQYLLRPAANVTPTKGSSNTEFKSTKEGFSIPVSADGFKFGISEPGNQEKKSEKPLENDTGLQAQDISGRKKGRGVIFGQTSSTFTFADVAKSTSGEGFQFGKKDLNFKGFSGAGEKLFSSQYGKMANKANTSGDFEKDDDAYKTEDSDDIHFEPVVQMPEKVELVTGEEGEKVLYSQGVKLFRFDAEVSQWKERGLGNLKILKNEVNGKVRMLMQREQVLKVCANHWITTTMNLKPLSGSDRAWMWSASDFSDGDAKLERLAAKFKTPELAEEFKQKFEECQRLLLDIPLQTPHKLVDTGRAAKLIQRAEEMKSGLKDFKTFLTNDQTKVAEEENKGSGTGAAGASDTTIKPNAENTGPTLEWDNYDLREDALDDSVSSSSVHASPLASSPVRKNLFHFDESTTGSNFSFKSALSLSKSPAKLNQSGTSVGTDEESDVTQEEERDGQYFEPVVPLPDLVEVSSGEENEQVVFSHRAEFYRYDKDVGQWKERGIGDIKILQNYDNKHVRILMRRDQVLKLCANHRITPDMSLQNMKGTERVWVWTACDFADGERKVEHLAVRFKLQDVADSFKKIFDEAKTAQEKDSLITPHVSRSSTPRESPCGKIAVAVLEETTRERTDVIQGDDVADAASEVEVSSTSETTTKAVVSPPKFVFGSESVKRIFSSEKSKPFAFGNSSATGSLFGFSFNAPLKSNNSETSSVAQSGSESKVEPKKCELSKNSDIEQSSDSKVKNLSASFPTEESSINYTFKTPEKEPPLWYAEFTKEELVQKLSSTTKSADHLNGLLREIEATNAVLMEQIKLLKSEIRRLERNQEQEVSAANVEHLKNVLLQFIFLKPGSERERLLPVINTMLQLSLEEKGKLAAVAQGEE.

Residue Ser-21 is modified to Phosphoserine. The TPR 1 repeat unit spans residues Pro-60–Gln-93. Residues Arg-176–Arg-229 adopt a coiled-coil conformation. The stretch at Gln-584–Ile-617 is one TPR 2 repeat. The disordered stretch occupies residues Gly-761–Ala-805. Low complexity predominate over residues Ser-779 to Pro-798. Residues Ala-805–Ala-837 adopt a coiled-coil conformation. In terms of domain architecture, RanBD1 1 spans His-1037–Asp-1173. Disordered regions lie at residues Val-1216 to Glu-1248, Ala-1307 to Phe-1335, and Asn-1581 to Ser-1622. Residues Ile-1236 to Pro-1245 show a composition bias toward polar residues. Residues Thr-1318 to Arg-1330 show a composition bias toward acidic residues. The region spanning Tyr-1334 to Lys-1470 is the RanBD1 2 domain. Polar residues predominate over residues Asn-1581–Glu-1594. Residues Ser-1595–Val-1618 are compositionally biased toward basic and acidic residues. The region spanning Gln-1703–Val-1753 is the GRIP domain.

The chain is RanBP2-like and GRIP domain-containing protein 3 (RGPD3) from Homo sapiens (Human).